A 178-amino-acid polypeptide reads, in one-letter code: Ribosome maturation factor RimM (178 aa).

The PRC barrel domain occupies 95-174 (EGQHFWFNVI…IVHVKDAKDI (80 aa)).

The protein belongs to the RimM family. As to quaternary structure, binds ribosomal protein uS19.

The protein localises to the cytoplasm. In terms of biological role, an accessory protein needed during the final step in the assembly of 30S ribosomal subunit, possibly for assembly of the head region. Essential for efficient processing of 16S rRNA. May be needed both before and after RbfA during the maturation of 16S rRNA. It has affinity for free ribosomal 30S subunits but not for 70S ribosomes. The polypeptide is Ribosome maturation factor RimM (Sulfurovum sp. (strain NBC37-1)).